The primary structure comprises 240 residues: Aspartate/glutamate leucyltransferase (240 aa).

The protein belongs to the R-transferase family. Bpt subfamily.

The protein resides in the cytoplasm. It carries out the reaction N-terminal L-glutamyl-[protein] + L-leucyl-tRNA(Leu) = N-terminal L-leucyl-L-glutamyl-[protein] + tRNA(Leu) + H(+). The catalysed reaction is N-terminal L-aspartyl-[protein] + L-leucyl-tRNA(Leu) = N-terminal L-leucyl-L-aspartyl-[protein] + tRNA(Leu) + H(+). Functionally, functions in the N-end rule pathway of protein degradation where it conjugates Leu from its aminoacyl-tRNA to the N-termini of proteins containing an N-terminal aspartate or glutamate. In Thiobacillus denitrificans (strain ATCC 25259 / T1), this protein is Aspartate/glutamate leucyltransferase.